We begin with the raw amino-acid sequence, 217 residues long: NADH-quinone oxidoreductase subunit I (217 aa).

Positions 22-41 (TTEQYPEEKKETAPRFHGRH) are disordered. 4Fe-4S ferredoxin-type domains follow at residues 43-73 (LNRHPDGLEKCVGCELCAWACPADAIYVEGA) and 89-118 (RVYQINYLRCILCGLCIEACPTRALTMSND). Positions 53, 56, 59, 63, 98, 101, 104, and 108 each coordinate [4Fe-4S] cluster. Positions 193–217 (ARRTAGEHSRADEVPAHGAGSERPR) are disordered.

Belongs to the complex I 23 kDa subunit family. In terms of assembly, NDH-1 is composed of 14 different subunits. Subunits NuoA, H, J, K, L, M, N constitute the membrane sector of the complex. The cofactor is [4Fe-4S] cluster.

It localises to the cell membrane. The enzyme catalyses a quinone + NADH + 5 H(+)(in) = a quinol + NAD(+) + 4 H(+)(out). Functionally, NDH-1 shuttles electrons from NADH, via FMN and iron-sulfur (Fe-S) centers, to quinones in the respiratory chain. The immediate electron acceptor for the enzyme in this species is believed to be ubiquinone. Couples the redox reaction to proton translocation (for every two electrons transferred, four hydrogen ions are translocated across the cytoplasmic membrane), and thus conserves the redox energy in a proton gradient. This is NADH-quinone oxidoreductase subunit I from Frankia casuarinae (strain DSM 45818 / CECT 9043 / HFP020203 / CcI3).